A 642-amino-acid polypeptide reads, in one-letter code: Zinc finger protein 398 (642 aa).

2 disordered regions span residues Met-1–Pro-24 and Glu-198–Ser-225. In terms of domain architecture, KRAB spans Val-143–Ile-214. Residues Ala-207–Glu-220 show a composition bias toward acidic residues. A Glycyl lysine isopeptide (Lys-Gly) (interchain with G-Cter in SUMO2) cross-link involves residue Lys-265. The segment at Phe-343–His-364 adopts a C2H2-type 1; atypical zinc-finger fold. The C2H2-type 2; degenerate zinc-finger motif lies at Leu-370–His-392. 7 C2H2-type zinc fingers span residues Pro-398–His-420, Phe-427–His-449, Phe-455–His-477, Phe-483–His-505, Tyr-511–His-533, Phe-539–His-561, and Tyr-567–His-590. Residues Arg-587 to Leu-615 form a disordered region.

Belongs to the krueppel C2H2-type zinc-finger protein family.

Its subcellular location is the nucleus. Functions as a transcriptional activator. The sequence is that of Zinc finger protein 398 (ZNF398) from Homo sapiens (Human).